The primary structure comprises 238 residues: Trypsin-3 (238 aa).

Residues 1–7 (FAVAFAA) form the signal peptide. A propeptide spans 8-15 (PIDDEDDK) (activation peptide). Residues 16-236 (IVGGYECRKN…YRSWISSTMS (221 aa)) form the Peptidase S1 domain. 6 cysteine pairs are disulfide-bonded: Cys22/Cys152, Cys40/Cys56, Cys124/Cys225, Cys131/Cys198, Cys163/Cys177, and Cys188/Cys212. His55 acts as the Charge relay system in catalysis. Ca(2+)-binding residues include Glu67, Asn69, Val72, and Glu77. The active-site Charge relay system is the Asp99. Ser192 (charge relay system) is an active-site residue.

Belongs to the peptidase S1 family. Ca(2+) serves as cofactor.

It localises to the secreted. The protein localises to the extracellular space. The enzyme catalyses Preferential cleavage: Arg-|-Xaa, Lys-|-Xaa.. The sequence is that of Trypsin-3 from Salmo salar (Atlantic salmon).